A 997-amino-acid chain; its full sequence is Glutamate [NMDA] receptor subunit 1 (997 aa).

An N-terminal signal peptide occupies residues 1 to 26 (MAVAGFVFCRPLFGLAIVLLVAPIDA). The Extracellular segment spans residues 27-573 (AQRHTASDNP…TLVSFLQPFS (547 aa)). N-linked (GlcNAc...) asparagine glycosylation is found at Asn258, Asn314, Asn345, Asn397, Asn454, Asn481, and Asn501. Residues 530–532 (PLT) and Arg537 contribute to the glycine site. The chain crosses the membrane as a helical span at residues 574–594 (NTLWILVMVSVHVVALVLYLL). Over 595 to 651 (DRFSPFGRFKLSHSDSNEEKALNLSSAVWFAWGVLLNSGIGEGTPRSFSARVLGMVW) the chain is Cytoplasmic. The chain crosses the membrane as a helical span at residues 652–672 (AGFAMIIVASYTANLAAFLVL). The Extracellular segment spans residues 673-831 (ERPKTKLSGI…KTPNTLGLKN (159 aa)). Residue Asn693 is glycosylated (N-linked (GlcNAc...) asparagine). Glycine contacts are provided by Ser703 and Asp747. The chain crosses the membrane as a helical span at residues 832–852 (MAGVFILVGVGIAGGVGLIII). At 853–997 (EVIYKKHQVK…YTSDVSHLVV (145 aa)) the chain is on the cytoplasmic side. The disordered stretch occupies residues 970–997 (LGKTRPQQSVLPPRYSPGYTSDVSHLVV). Residues 987–997 (GYTSDVSHLVV) show a composition bias toward polar residues.

The protein belongs to the glutamate-gated ion channel (TC 1.A.10.1) family. As to quaternary structure, forms a heteromeric NMDA channel with Nmdar2.

It is found in the cell membrane. Its subcellular location is the postsynaptic cell membrane. The protein resides in the postsynaptic density. NMDA receptor subtype of glutamate-gated ion channels with high calcium permeability and voltage-dependent sensitivity to magnesium. Mediated by glycine. This protein plays a key role in synaptic plasticity, synaptogenesis, excitotoxicity, memory acquisition and learning. It mediates neuronal functions in glutamate neurotransmission. Is involved in the cell surface targeting of NMDA receptors. Plays a role in associative learning and in long-term memory consolidation. The polypeptide is Glutamate [NMDA] receptor subunit 1 (Drosophila sechellia (Fruit fly)).